The chain runs to 889 residues: Protein argonaute 15 (889 aa).

2 disordered regions span residues 1–26 (MESH…SRKG) and 119–150 (EDAS…RMKR). Positions 122 to 132 (SSSGRTTTRRS) are enriched in low complexity. A PAZ domain is found at 264 to 379 (PVIEFLLFNQ…IPLELCHLVP (116 aa)). The Piwi domain maps to 546–853 (FVLCVLPERK…AAAQVSQFVR (308 aa)). The disordered stretch occupies residues 857–878 (AASEGSGDGGAPPRPVPELPRL).

Belongs to the argonaute family. Ago subfamily.

In terms of biological role, probably involved in the RNA silencing pathway. May bind to short RNAs such as microRNAs (miRNAs) or short interfering RNAs (siRNAs), and represses the translation of mRNAs which are complementary to them. The protein is Protein argonaute 15 (AGO15) of Oryza sativa subsp. japonica (Rice).